Reading from the N-terminus, the 304-residue chain is HTH-type transcriptional activator CmpR (304 aa).

The HTH lysR-type domain maps to 1 to 61 (MKNATLHQFE…EQIGRKIYLT (61 aa)). A DNA-binding region (H-T-H motif) is located at residues 21 to 40 (FTKAAEELFLTQPTVSQQMK).

The protein belongs to the LysR transcriptional regulatory family.

It localises to the cytoplasm. Its function is as follows. Activates transcription of the cmpABCD operon under carbon dioxide-limited conditions. Specifically binds to the cmpR-cmpA intergenic region. The chain is HTH-type transcriptional activator CmpR (cmpR) from Synechocystis sp. (strain ATCC 27184 / PCC 6803 / Kazusa).